Consider the following 459-residue polypeptide: MDHLPIFCQLRDRDCLIVGGGDVAERKARLLLEAGARLTVNALTFIPQFTVWANEGMLTLVEGPFDETLLDSCWLAIAATDDDTVNQRVSDAAESRRIFCNVVDAPKAASFIMPSIIDRSPLMVAVSSGGTSPVLARLLREKLESLLPQHLGQVARYAGQLRARVKKQFATMGERRRFWEKFFVNDRLAQSLANADEKAVNATTERLFSEPLDHRGEVVLVGAGPGDAGLLTLKGLQQIQQADIVVYDRLVSDDIMNLVRRDADRVFVGKRAGYHCVPQEEINQILLREAQKGKRVVRLKGGDPFIFGRGGEELETLCHAGIPFSVVPGITAASGCSAYSGIPLTHRDYAQSVRLVTGHLKTGGELDWENLAAEKQTLVFYMGLNQAATIQEKLIAFGMQADMPVALVENGTSVKQRVVHGVLTQLGELAQQVESPALIIVGRVVGLRDKLNWFSNYYD.

The segment at Met1–Thr204 is precorrin-2 dehydrogenase /sirohydrochlorin ferrochelatase. Residues Asp22–Val23 and Leu43–Thr44 contribute to the NAD(+) site. Ser128 carries the post-translational modification Phosphoserine. Residues Gly216 to Asp459 are uroporphyrinogen-III C-methyltransferase. Pro225 is a binding site for S-adenosyl-L-methionine. Asp248 functions as the Proton acceptor in the catalytic mechanism. Residue Lys270 is the Proton donor of the active site. S-adenosyl-L-methionine contacts are provided by residues Gly301 to Asp303, Ile306, Thr331 to Ala332, Met382, and Gly411.

It in the N-terminal section; belongs to the precorrin-2 dehydrogenase / sirohydrochlorin ferrochelatase family. In the C-terminal section; belongs to the precorrin methyltransferase family.

The enzyme catalyses uroporphyrinogen III + 2 S-adenosyl-L-methionine = precorrin-2 + 2 S-adenosyl-L-homocysteine + H(+). The catalysed reaction is precorrin-2 + NAD(+) = sirohydrochlorin + NADH + 2 H(+). It catalyses the reaction siroheme + 2 H(+) = sirohydrochlorin + Fe(2+). It participates in cofactor biosynthesis; adenosylcobalamin biosynthesis; precorrin-2 from uroporphyrinogen III: step 1/1. The protein operates within cofactor biosynthesis; adenosylcobalamin biosynthesis; sirohydrochlorin from precorrin-2: step 1/1. It functions in the pathway porphyrin-containing compound metabolism; siroheme biosynthesis; precorrin-2 from uroporphyrinogen III: step 1/1. Its pathway is porphyrin-containing compound metabolism; siroheme biosynthesis; siroheme from sirohydrochlorin: step 1/1. It participates in porphyrin-containing compound metabolism; siroheme biosynthesis; sirohydrochlorin from precorrin-2: step 1/1. Its function is as follows. Multifunctional enzyme that catalyzes the SAM-dependent methylations of uroporphyrinogen III at position C-2 and C-7 to form precorrin-2 via precorrin-1. Then it catalyzes the NAD-dependent ring dehydrogenation of precorrin-2 to yield sirohydrochlorin. Finally, it catalyzes the ferrochelation of sirohydrochlorin to yield siroheme. The chain is Siroheme synthase from Salmonella agona (strain SL483).